The following is a 272-amino-acid chain: Methyl-CpG-binding domain-containing protein 2 (272 aa).

Over residues 1 to 15 the composition is skewed to polar residues; sequence MSMSQSRAVQRSSSP. Positions 1–24 are disordered; the sequence is MSMSQSRAVQRSSSPNEDRGENQL. Residues 53–112 form a CW-type zinc finger; sequence CPSIGAFTVQCASCFKWRLMPSMQKYEEIREQLLENPFFCDTAREWKPDISCDVPADIYQ. The MBD-associated domain (MAD) signature appears at 62–104; that stretch reads QCASCFKWRLMPSMQKYEEIREQLLENPFFCDTAREWKPDISC. 4 residues coordinate Zn(2+): Cys63, Cys66, Cys92, and Cys104. Residues 118 to 192 enclose the MBD domain; sequence WAIDKPNISR…SQFSFQIPKP (75 aa). The span at 236-250 shows a compositional bias: polar residues; that stretch reads LGTPTESGLNNSHYQ. The disordered stretch occupies residues 236 to 272; that stretch reads LGTPTESGLNNSHYQPSKKKKTSTLSIFGSNDELADR.

Interacts (via MBD domain) with DDM1. In terms of tissue distribution, expressed in buds, flowers, stems, siliques and mature seeds.

It localises to the nucleus. Its function is as follows. Probable transcriptional regulator. This chain is Methyl-CpG-binding domain-containing protein 2 (MBD2), found in Arabidopsis thaliana (Mouse-ear cress).